The following is a 439-amino-acid chain: Secreted aspartic protease FUS4 (439 aa).

Residues 1–22 (MLTIATLHVALQVFGAFSPSHA) form the signal peptide. The Peptidase A1 domain occupies 49 to 434 (YLFNVTVGSP…NFEDRSFGLA (386 aa)). N-linked (GlcNAc...) asparagine glycosylation is found at Asn-52 and Asn-61. Asp-67 is an active-site residue. N-linked (GlcNAc...) asparagine glycosylation is found at Asn-101, Asn-107, and Asn-123. Asp-296 is an active-site residue. Cysteines 352 and 390 form a disulfide.

Belongs to the peptidase A1 family.

It is found in the secreted. In terms of biological role, secreted aspartic protease; part of the gene cluster that mediates the biosynthesis of the mycotoxin fusarin C. Within the cluster, FUS1, FUS2, FUS8 and FUS9 are sufficient for fusarin production. The other FUS cluster members are not essential for fusarin C biosynthesis. The chain is Secreted aspartic protease FUS4 from Gibberella moniliformis (strain M3125 / FGSC 7600) (Maize ear and stalk rot fungus).